Consider the following 425-residue polypeptide: MAKQIQAIRGMNDILPTQSPLWQKVEAVLRASVAAYGYSEIRTPIVENTDLFKRSIGEVTDIVEKEMYTFEDRNGDSLTLRPEGTASTVRAGNEHGLLYNQEQRLWYMGPMFRHERPQKGRYRQFHQFGVEVYGIGSADIDAEVLMLSARLWEKLGISEHVTLELNTLGDPAERAAYREALIAFLEQHKDKLDEDSQRRMYSNPLRVLDSKDPQVQSILGDAPALMDYLGEESSQHFAQLRELLDAVGIQYRVNPRLVRGLDYYNRTVFEWVTNSLGSQGTVLAGGRYDGLVAQLGGKDTPAVGFAMGLERIVLLLETLELTQDIPAAVDVYVAAMGDSCLVEAIKVAQELRSTLPTLRVMSHCGGGNFKKQIKRADKSGAQVALLIGEEELAEGVVTVKYLRNDNEQQRVARNALSAFLAELTK.

This sequence belongs to the class-II aminoacyl-tRNA synthetase family. Homodimer.

Its subcellular location is the cytoplasm. It catalyses the reaction tRNA(His) + L-histidine + ATP = L-histidyl-tRNA(His) + AMP + diphosphate + H(+). This Shewanella sp. (strain MR-4) protein is Histidine--tRNA ligase.